Here is a 623-residue protein sequence, read N- to C-terminus: tRNA 5-methylaminomethyl-2-thiouridine biosynthesis bifunctional protein MnmC (623 aa).

The tract at residues 1 to 244 is tRNA (mnm(5)s(2)U34)-methyltransferase; sequence MCVSSSIQTA…KREMLKAIWP (244 aa). The FAD-dependent cmnm(5)s(2)U34 oxidoreductase stretch occupies residues 268–623; the sequence is IGAGIAGLHC…VKIKKPYYSS (356 aa).

The protein in the N-terminal section; belongs to the methyltransferase superfamily. tRNA (mnm(5)s(2)U34)-methyltransferase family. This sequence in the C-terminal section; belongs to the DAO family. Requires FAD as cofactor.

Its subcellular location is the cytoplasm. It catalyses the reaction 5-aminomethyl-2-thiouridine(34) in tRNA + S-adenosyl-L-methionine = 5-methylaminomethyl-2-thiouridine(34) in tRNA + S-adenosyl-L-homocysteine + H(+). Its function is as follows. Catalyzes the last two steps in the biosynthesis of 5-methylaminomethyl-2-thiouridine (mnm(5)s(2)U) at the wobble position (U34) in tRNA. Catalyzes the FAD-dependent demodification of cmnm(5)s(2)U34 to nm(5)s(2)U34, followed by the transfer of a methyl group from S-adenosyl-L-methionine to nm(5)s(2)U34, to form mnm(5)s(2)U34. The polypeptide is tRNA 5-methylaminomethyl-2-thiouridine biosynthesis bifunctional protein MnmC (Acinetobacter baylyi (strain ATCC 33305 / BD413 / ADP1)).